Consider the following 131-residue polypeptide: Small ribosomal subunit protein uS8 (131 aa).

This sequence belongs to the universal ribosomal protein uS8 family. In terms of assembly, part of the 30S ribosomal subunit. Contacts proteins S5 and S12.

In terms of biological role, one of the primary rRNA binding proteins, it binds directly to 16S rRNA central domain where it helps coordinate assembly of the platform of the 30S subunit. This chain is Small ribosomal subunit protein uS8, found in Clostridium novyi (strain NT).